We begin with the raw amino-acid sequence, 211 residues long: Large ribosomal subunit protein uL4 (211 aa).

A disordered region spans residues 44 to 90 (ERQGTHSTLTKGEVRGGGKKPWRQKHTGKARTGSTRNPHWTGGGVVF). The segment covering 60 to 72 (GGKKPWRQKHTGK) has biased composition (basic residues).

It belongs to the universal ribosomal protein uL4 family. In terms of assembly, part of the 50S ribosomal subunit.

Functionally, one of the primary rRNA binding proteins, this protein initially binds near the 5'-end of the 23S rRNA. It is important during the early stages of 50S assembly. It makes multiple contacts with different domains of the 23S rRNA in the assembled 50S subunit and ribosome. In terms of biological role, forms part of the polypeptide exit tunnel. The protein is Large ribosomal subunit protein uL4 of Ureaplasma urealyticum serovar 10 (strain ATCC 33699 / Western).